We begin with the raw amino-acid sequence, 374 residues long: Wnt inhibitory factor 1 (374 aa).

Residues 1 to 28 form the signal peptide; it reads MSLTGYFAAPLCSIFLFILAHADAGQQE. A WIF domain is found at 33–172; sequence MWIDAHQARV…PQNAIFFKTC (140 aa). N-linked (GlcNAc...) asparagine glycosylation occurs at asparagine 83. 7 cysteine pairs are disulfide-bonded: cysteine 135/cysteine 172, cysteine 177/cysteine 187, cysteine 181/cysteine 193, cysteine 195/cysteine 204, cysteine 209/cysteine 219, cysteine 213/cysteine 225, and cysteine 227/cysteine 236. EGF-like domains lie at 173–205, 208–237, 237–269, 270–301, and 302–333; these read QQAKCTGGCRNGGFCNDRHVCECPDGFYGPHCE, LCMPRCMNGGLCVTPGLCICPPGYYGINCD, DKVNCTTHCLNGGTCFYPGKCICPSGYEGEQCE, TSKCQQPCRNGGKCSGKNKCKCSKGYQGDLCS, and KPVCEPSCGAHGTCIEPNKCQCKEGWNGRYCN. N-linked (GlcNAc...) asparagine glycosylation is present at asparagine 240. Cystine bridges form between cysteine 241–cysteine 251, cysteine 245–cysteine 257, cysteine 259–cysteine 268, cysteine 273–cysteine 283, cysteine 277–cysteine 289, cysteine 291–cysteine 300, cysteine 305–cysteine 315, cysteine 309–cysteine 321, and cysteine 323–cysteine 332. The tract at residues 343-374 is disordered; it reads ALRPTGSRNRQHTPSPKRTEDRQALPESNYIW. Positions 348-358 are enriched in polar residues; sequence GSRNRQHTPSP.

As to expression, during somatogenesis, expressed predominantly in unsegmented paraxial presomitic mesoderm and, to a much lesser extent, in newly segmented somites.

The protein localises to the secreted. In terms of biological role, binds to WNT proteins and inhibits their activities. May be involved in mesoderm segmentation. The sequence is that of Wnt inhibitory factor 1 (wif1) from Xenopus laevis (African clawed frog).